Consider the following 431-residue polypeptide: Chaperone SurA (431 aa).

Positions 1–22 (MNLKKLLTSAVLSISLCQSAFA) are cleaved as a signal peptide. PpiC domains lie at 173 to 274 (AEEY…KVQD) and 283 to 383 (TTET…QLLD).

The protein resides in the periplasm. The catalysed reaction is [protein]-peptidylproline (omega=180) = [protein]-peptidylproline (omega=0). In terms of biological role, chaperone involved in the correct folding and assembly of outer membrane proteins. Recognizes specific patterns of aromatic residues and the orientation of their side chains, which are found more frequently in integral outer membrane proteins. May act in both early periplasmic and late outer membrane-associated steps of protein maturation. The sequence is that of Chaperone SurA from Pseudoalteromonas translucida (strain TAC 125).